The primary structure comprises 117 residues: MQAKAVLRHTPTSPRKMRIVAGLIRGKQVDQAKAILMNSTKAASRNVMQTLKSAVANYSQKNPDTRAGDNDLFIKEIFVDEGPTIKRMLPAPMGRAYRIRKRSNHLTIIVDTVNPVS.

It belongs to the universal ribosomal protein uL22 family. Part of the 50S ribosomal subunit.

Its function is as follows. This protein binds specifically to 23S rRNA; its binding is stimulated by other ribosomal proteins, e.g. L4, L17, and L20. It is important during the early stages of 50S assembly. It makes multiple contacts with different domains of the 23S rRNA in the assembled 50S subunit and ribosome. The globular domain of the protein is located near the polypeptide exit tunnel on the outside of the subunit, while an extended beta-hairpin is found that lines the wall of the exit tunnel in the center of the 70S ribosome. This chain is Large ribosomal subunit protein uL22, found in Chlorobium phaeobacteroides (strain BS1).